The chain runs to 319 residues: Annexin A4 (319 aa).

The residue at position 7 (Thr7) is a Phosphothreonine. Ser12 carries the phosphoserine modification. Annexin repeat units lie at residues 14–85, 86–157, 169–241, and 245–316; these read FNAT…GMMT, PTVL…SLTA, ALVR…AIVK, and NKPA…ILCG. An N6-acetyllysine mark is found at Lys213, Lys293, and Lys300.

It belongs to the annexin family.

The protein resides in the zymogen granule membrane. Its function is as follows. Calcium/phospholipid-binding protein which promotes membrane fusion and is involved in exocytosis. In Rattus norvegicus (Rat), this protein is Annexin A4 (Anxa4).